A 344-amino-acid polypeptide reads, in one-letter code: Protein RecA (344 aa).

65 to 72 (GPESSGKT) is a binding site for ATP. Basic and acidic residues predominate over residues 323-337 (ELREKFQPAEAPREA). The disordered stretch occupies residues 323–344 (ELREKFQPAEAPREAGDDEDKE).

Belongs to the RecA family.

The protein localises to the cytoplasm. In terms of biological role, can catalyze the hydrolysis of ATP in the presence of single-stranded DNA, the ATP-dependent uptake of single-stranded DNA by duplex DNA, and the ATP-dependent hybridization of homologous single-stranded DNAs. It interacts with LexA causing its activation and leading to its autocatalytic cleavage. The chain is Protein RecA from Xanthomonas axonopodis pv. citri (strain 306).